The following is a 136-amino-acid chain: C-type natriuretic peptide prohormone (136 aa).

Positions 1-21 (MSGQTSFYCGLLLVLLIQAQA) are cleaved as a signal peptide. C120 and C136 are oxidised to a cystine.

This sequence belongs to the natriuretic peptide family. In terms of tissue distribution, CNP-115 is differentially processed to produce CNP-38 and CNP-39 in the heart and CNP-22 in the brain.

Its subcellular location is the secreted. Hormone which may be vasoactive and natriuretic. Has a cGMP-stimulating activity. The chain is C-type natriuretic peptide prohormone from Triakis scyllium (Banded houndshark).